We begin with the raw amino-acid sequence, 138 residues long: Small ribosomal subunit protein uS11c (138 aa).

Residues 1-23 (MAKPIPRIGSRRNGRIGSRKSAR) are disordered. Over residues 9–23 (GSRRNGRIGSRKSAR) the composition is skewed to basic residues.

The protein belongs to the universal ribosomal protein uS11 family. Part of the 30S ribosomal subunit.

The protein localises to the plastid. It is found in the chloroplast. This Vitis vinifera (Grape) protein is Small ribosomal subunit protein uS11c.